Consider the following 812-residue polypeptide: DNA replication licensing factor MCM3 (812 aa).

An N-acetylalanine modification is found at A2. S160 carries the post-translational modification Phosphoserine. The residue at position 293 (K293) is an N6-acetyllysine. The 208-residue stretch at 295-502 (VFEQLARSLA…QDREISDHVL (208 aa)) folds into the MCM domain. 5 residues coordinate ADP: Q353, L393, E394, A395, and A397. Positions 477–480 (SRFD) match the Arginine finger motif. Residue K547 is modified to N6-acetyllysine. S611 is modified (phosphoserine). An ATP-binding site is contributed by R664. Residues 664–744 (RKKASEDESD…TQDSQKVELS (81 aa)) form a disordered region. Phosphoserine occurs at positions 668, 672, and 681. The segment covering 670–681 (DESDLEDEEEKS) has biased composition (acidic residues). The residue at position 705 (Y705) is a Phosphotyrosine. S708 carries the phosphoserine modification. T719, T722, and T729 each carry phosphothreonine. Positions 720–744 (PKTDDSQEKTDDSQETQDSQKVELS) are enriched in basic and acidic residues. S732 and S738 each carry phosphoserine.

Belongs to the MCM family. In terms of assembly, component of the MCM2-7 complex. The complex forms a toroidal hexameric ring with the proposed subunit order MCM2-MCM6-MCM4-MCM7-MCM3-MCM5. Component of the CMG helicase complex, a hexameric ring of related MCM2-7 subunits stabilized by CDC45 and the tetrameric GINS complex. Associated with the replication-specific DNA polymerase alpha. Interacts with MCMBP. Interacts with ANKRD17. Interacts with MCM3AP; this interaction leads to MCM3 acetylation. In terms of processing, acetylated by MCM3AP. O-glycosylated (O-GlcNAcylated), in a cell cycle-dependent manner.

Its subcellular location is the nucleus. It is found in the chromosome. It carries out the reaction ATP + H2O = ADP + phosphate + H(+). Acts as a component of the MCM2-7 complex (MCM complex) which is the replicative helicase essential for 'once per cell cycle' DNA replication initiation and elongation in eukaryotic cells. Core component of CDC45-MCM-GINS (CMG) helicase, the molecular machine that unwinds template DNA during replication, and around which the replisome is built. The active ATPase sites in the MCM2-7 ring are formed through the interaction surfaces of two neighboring subunits such that a critical structure of a conserved arginine finger motif is provided in trans relative to the ATP-binding site of the Walker A box of the adjacent subunit. The six ATPase active sites, however, are likely to contribute differentially to the complex helicase activity. Required for the entry in S phase and for cell division. The sequence is that of DNA replication licensing factor MCM3 (Mcm3) from Mus musculus (Mouse).